A 380-amino-acid chain; its full sequence is NF-kappa-B inhibitor-like protein 1 (380 aa).

The tract at residues 1-34 is disordered; that stretch reads MSNPSPQVPEGEASTSVCRPKSSMASTSRRQRRE. Positions 13–28 are enriched in polar residues; sequence ASTSVCRPKSSMASTS. ANK repeat units lie at residues 64–93 and 97–133; these read GQPP…DPAH and HGDT…IKNK. Disordered regions lie at residues 131 to 167 and 185 to 293; these read KNKD…EWRQ and EDDA…RGSL. At S150 the chain carries Phosphoserine. Residues 150-159 show a composition bias toward acidic residues; sequence SAEEEEEDEA. 2 stretches are compositionally biased toward basic and acidic residues: residues 204–221 and 236–272; these read RMAR…ETEG and RQQE…RDPV.

In terms of assembly, interacts with CACTIN (via N-terminal domain); the interaction occurs in a pro-inflammatory-independent manner.

It is found in the nucleus. In terms of biological role, involved in the regulation of innate immune response. Acts as negative regulator of Toll-like receptor and interferon-regulatory factor (IRF) signaling pathways. Contributes to the negative regulation of transcriptional activation of NF-kappa-B target genes in response to endogenous pro-inflammatory stimuli. In Sus scrofa (Pig), this protein is NF-kappa-B inhibitor-like protein 1 (NFKBIL1).